Reading from the N-terminus, the 196-residue chain is GTP cyclohydrolase 1 (196 aa).

Residues Cys-85, His-88, and Cys-158 each coordinate Zn(2+).

This sequence belongs to the GTP cyclohydrolase I family. In terms of assembly, homomer.

It carries out the reaction GTP + H2O = 7,8-dihydroneopterin 3'-triphosphate + formate + H(+). Its pathway is cofactor biosynthesis; 7,8-dihydroneopterin triphosphate biosynthesis; 7,8-dihydroneopterin triphosphate from GTP: step 1/1. The chain is GTP cyclohydrolase 1 from Corynebacterium aurimucosum (strain ATCC 700975 / DSM 44827 / CIP 107346 / CN-1) (Corynebacterium nigricans).